The primary structure comprises 452 residues: Protein phosphatase 1F (452 aa).

Positions 153 to 410 (LVSIHAIRNT…DNITVMVVFL (258 aa)) constitute a PPM-type phosphatase domain. Mn(2+)-binding residues include aspartate 195, glycine 196, aspartate 357, and aspartate 401. Residue serine 452 is modified to Phosphoserine.

The protein belongs to the PP2C family. In terms of assembly, associates with FEM1B. Requires Mg(2+) as cofactor. Mn(2+) is required as a cofactor. Expressed in the liver.

The catalysed reaction is O-phospho-L-seryl-[protein] + H2O = L-seryl-[protein] + phosphate. It catalyses the reaction O-phospho-L-threonyl-[protein] + H2O = L-threonyl-[protein] + phosphate. Its function is as follows. Dephosphorylates and concomitantly deactivates CaM-kinase II activated upon autophosphorylation, and CaM-kinases IV and I activated upon phosphorylation by CaM-kinase kinase. Promotes apoptosis. This is Protein phosphatase 1F (Ppm1f) from Mus musculus (Mouse).